A 550-amino-acid polypeptide reads, in one-letter code: 2-succinyl-5-enolpyruvyl-6-hydroxy-3-cyclohexene-1-carboxylate synthase (550 aa).

Belongs to the TPP enzyme family. MenD subfamily. Homodimer. Mg(2+) serves as cofactor. The cofactor is Mn(2+). Thiamine diphosphate is required as a cofactor.

The enzyme catalyses isochorismate + 2-oxoglutarate + H(+) = 5-enolpyruvoyl-6-hydroxy-2-succinyl-cyclohex-3-ene-1-carboxylate + CO2. It participates in quinol/quinone metabolism; 1,4-dihydroxy-2-naphthoate biosynthesis; 1,4-dihydroxy-2-naphthoate from chorismate: step 2/7. The protein operates within quinol/quinone metabolism; menaquinone biosynthesis. Its function is as follows. Catalyzes the thiamine diphosphate-dependent decarboxylation of 2-oxoglutarate and the subsequent addition of the resulting succinic semialdehyde-thiamine pyrophosphate anion to isochorismate to yield 2-succinyl-5-enolpyruvyl-6-hydroxy-3-cyclohexene-1-carboxylate (SEPHCHC). The polypeptide is 2-succinyl-5-enolpyruvyl-6-hydroxy-3-cyclohexene-1-carboxylate synthase (Flavobacterium psychrophilum (strain ATCC 49511 / DSM 21280 / CIP 103535 / JIP02/86)).